The chain runs to 423 residues: Histidine--tRNA ligase (423 aa).

It belongs to the class-II aminoacyl-tRNA synthetase family. Homodimer.

It is found in the cytoplasm. The catalysed reaction is tRNA(His) + L-histidine + ATP = L-histidyl-tRNA(His) + AMP + diphosphate + H(+). This chain is Histidine--tRNA ligase (hisS), found in Pasteurella multocida (strain Pm70).